We begin with the raw amino-acid sequence, 107 residues long: Large ribosomal subunit protein mL55 (107 aa).

The N-terminal 16 residues, 1–16 (MLLKQLPQAVQQIRCI), are a transit peptide targeting the mitochondrion.

It belongs to the mitochondrion-specific ribosomal protein mL55 family. In terms of assembly, component of the mitochondrial ribosome large subunit (39S) which comprises a 16S rRNA and about 50 distinct proteins. Ubiquitously expressed (at protein level).

It is found in the mitochondrion. Involved in mitochondrial biogenesis and G2/M phase cell cycle progression. The chain is Large ribosomal subunit protein mL55 (mRpL55) from Drosophila melanogaster (Fruit fly).